Consider the following 66-residue polypeptide: Disintegrin EO5B (66 aa).

One can recognise a Disintegrin domain in the interval 1–65 (NSAHPCCDPV…DCPRNPYKGK (65 aa)). Cystine bridges form between Cys-6-Cys-29, Cys-20-Cys-26, Cys-25-Cys-50, and Cys-38-Cys-57. Residues 42–44 (VGD) carry the Cell attachment site; atypical (VGD) motif.

Belongs to the disintegrin family. Dimeric disintegrin subfamily. As to quaternary structure, heterodimer with EO4A or EO5A; disulfide-linked. In terms of tissue distribution, expressed by the venom gland.

The protein resides in the secreted. Poor inhibitor of platelet aggregation. When it dimerizes with EO4A, it inhibits the adhesion of cells expressing the RGD-dependent integrin alpha-5/beta-1 (ITGA5/ITGB1) to immobilized fibronectin. When it dimerizes with EO5A, it inhibits the adhesion of the alpha-4/beta-1 (ITGA4/ITGB1) integrin to VCAM-1. When it dimerizes either with EO4A or EO5A, the inhibition on alpha-IIb/beta-3 (ITGA2B/ITGB3) is low. The chain is Disintegrin EO5B from Echis ocellatus (Ocellated saw-scaled viper).